A 483-amino-acid chain; its full sequence is Probable cytochrome P450 517A4 (483 aa).

Residues 1–21 form a helical membrane-spanning segment; that stretch reads MEIVNVLLFLIILFLVKDFVK. Heme is bound at residue Cys429.

The protein belongs to the cytochrome P450 family. The cofactor is heme.

The protein resides in the membrane. This Dictyostelium discoideum (Social amoeba) protein is Probable cytochrome P450 517A4 (cyp517A4).